Here is a 486-residue protein sequence, read N- to C-terminus: MSRSDWEVVIGLEVHAQLNTASKIFSGASTAFGAEPNVQASAVDIALPGVLPVLNRGAVERAIRFGLAIGATVAPTSVFARKNYFYPDLPKGYQISQFELPVVQGGTITIRVGEGENAYEKTVNLTRAHLEEDAGKSLHEDFHGMSGIDLNRAGTPLLEIVSEPDMRSSAEAVAYARTLHALVRWIDICDGNMQEGSFRCDANVSVRKKGAEKFGTRREIKNLNSFRFLQQAIDYEVQWQIDTIEDGGTIQQATVLFDPDTGETRMMRSKEDAHDYRYFPDPDLLPLVISPEWKARVQGEMPELPEAMKARFIEQLGLSAYDATTLTASKEVATYYQATVDAAGAALAKPCANWVMGDLAARLNKAELDIAVSPVSPAQLAGLVARIADNTISNAIAKKVFEALWNGEGASADEIIDKQGLKQVTDSGAIEAMIDEVLAANQKSVEEFRAGKDKAFNALVGQVMKASKGKASPAQVNELLKKKLAG.

Belongs to the GatB/GatE family. GatB subfamily. Heterotrimer of A, B and C subunits.

It catalyses the reaction L-glutamyl-tRNA(Gln) + L-glutamine + ATP + H2O = L-glutaminyl-tRNA(Gln) + L-glutamate + ADP + phosphate + H(+). The enzyme catalyses L-aspartyl-tRNA(Asn) + L-glutamine + ATP + H2O = L-asparaginyl-tRNA(Asn) + L-glutamate + ADP + phosphate + 2 H(+). In terms of biological role, allows the formation of correctly charged Asn-tRNA(Asn) or Gln-tRNA(Gln) through the transamidation of misacylated Asp-tRNA(Asn) or Glu-tRNA(Gln) in organisms which lack either or both of asparaginyl-tRNA or glutaminyl-tRNA synthetases. The reaction takes place in the presence of glutamine and ATP through an activated phospho-Asp-tRNA(Asn) or phospho-Glu-tRNA(Gln). The polypeptide is Aspartyl/glutamyl-tRNA(Asn/Gln) amidotransferase subunit B (Azoarcus sp. (strain BH72)).